We begin with the raw amino-acid sequence, 602 residues long: Leucine-rich repeat-containing protein 40 (602 aa).

The disordered stretch occupies residues 1-20 (MSRLKRIAGQDPRAGFKAAG). Ser-71 carries the phosphoserine modification. LRR repeat units follow at residues 83 to 104 (DLTK…LRLL), 106 to 127 (ALTV…MREL), 129 to 150 (NLQK…ITNL), 152 to 173 (NLKC…FEQL), 175 to 196 (NLED…FSSL), 198 to 219 (SLVR…INRM), 221 to 242 (RLKH…LAGM), 244 to 265 (SLEL…PSCS), 266 to 286 (LLKE…EHLK), 290 to 311 (SILV…IILL), 313 to 335 (SLER…GNLH), 336 to 356 (LKFL…IINK), 400 to 421 (TLKI…VFNA), 426 to 447 (IITS…MVEL), 450 to 471 (MVSD…LCML), 473 to 494 (KLTF…MESL), 496 to 517 (RLQT…LYRI), 519 to 540 (TLET…KMKM), 543 to 564 (NLTT…LGNC), and 566 to 586 (NLRT…AILI).

The sequence is that of Leucine-rich repeat-containing protein 40 (LRRC40) from Macaca fascicularis (Crab-eating macaque).